The following is a 274-amino-acid chain: UPF0173 metal-dependent hydrolase AnaeK_1127 (274 aa).

It belongs to the UPF0173 family.

This Anaeromyxobacter sp. (strain K) protein is UPF0173 metal-dependent hydrolase AnaeK_1127.